The chain runs to 131 residues: uncharacterized protein (131 aa).

The CMP/dCMP-type deaminase domain maps to 1-116; sequence MYMARMLSEM…EMLEASSIQC (116 aa).

This is an uncharacterized protein from Caenorhabditis elegans.